A 287-amino-acid polypeptide reads, in one-letter code: Large ribosomal subunit protein uL2 (287 aa).

A disordered region spans residues 221 to 287 (RGSVMNPCDH…SKRSRGGRDS (67 aa)). The segment covering 258-287 (KTRKRNKPSNKFVLRKRRKTSKRSRGGRDS) has biased composition (basic residues).

Belongs to the universal ribosomal protein uL2 family. As to quaternary structure, part of the 50S ribosomal subunit. Forms a bridge to the 30S subunit in the 70S ribosome.

One of the primary rRNA binding proteins. Required for association of the 30S and 50S subunits to form the 70S ribosome, for tRNA binding and peptide bond formation. It has been suggested to have peptidyltransferase activity; this is somewhat controversial. Makes several contacts with the 16S rRNA in the 70S ribosome. This Synechococcus sp. (strain CC9311) protein is Large ribosomal subunit protein uL2.